A 245-amino-acid chain; its full sequence is uncharacterized protein (245 aa).

The N-terminal stretch at 1–27 is a signal peptide; the sequence is MKLKKRVSMFLVALTMCGGLFVTPAKA.

This is an uncharacterized protein from Bacillus subtilis (strain 168).